A 775-amino-acid polypeptide reads, in one-letter code: Ribonucleoside-diphosphate reductase large subunit (775 aa).

Residues T200, 215-216 (SC), G246, 427-431 (NLCTE), and 606-610 (PTVSS) contribute to the substrate site. A disulfide bridge connects residues C216 and C444. N427 acts as the Proton acceptor in catalysis. The active-site Cysteine radical intermediate is the C429. E431 acts as the Proton acceptor in catalysis.

This sequence belongs to the ribonucleoside diphosphate reductase large chain family. In terms of assembly, heterotetramer composed of a homodimer of the large subunit (R1) and a homodimer of the small subunit (R2). Larger multisubunit protein complex are also active, composed of (R1)n(R2)n.

It carries out the reaction a 2'-deoxyribonucleoside 5'-diphosphate + [thioredoxin]-disulfide + H2O = a ribonucleoside 5'-diphosphate + [thioredoxin]-dithiol. Functionally, ribonucleoside-diphosphate reductase holoenzyme provides the precursors necessary for viral DNA synthesis. Allows virus growth in non-dividing cells, as well as reactivation from latency in infected hosts. Catalyzes the biosynthesis of deoxyribonucleotides from the corresponding ribonucleotides. The chain is Ribonucleoside-diphosphate reductase large subunit from Homo sapiens (Human).